The sequence spans 138 residues: Basic phospholipase A2 ammodytoxin C (138 aa).

An N-terminal signal peptide occupies residues 1–16; that stretch reads MRTLWIVAVCLIGVEG. 7 disulfides stabilise this stretch: Cys42-Cys131, Cys44-Cys60, Cys59-Cys111, Cys65-Cys138, Cys66-Cys104, Cys73-Cys97, and Cys91-Cys102. 3 residues coordinate Ca(2+): Tyr43, Gly45, and Gly47. His63 is an active-site residue. Residue Asp64 coordinates Ca(2+). Asp105 is a catalytic residue.

It belongs to the phospholipase A2 family. Group II subfamily. D49 sub-subfamily. In terms of assembly, monomer. Binds to calmodulin, coagulation factor X (F10), 14-3-3 proteins gamma (YWHAG) and epsilon (YWHAE), and R25, a mitochondrial membrane protein. May bind to M-type PLA2 receptor (R-180). Ca(2+) is required as a cofactor. Expressed by the venom gland.

The protein localises to the secreted. Its subcellular location is the host cytoplasm. It localises to the host cytosol. It carries out the reaction a 1,2-diacyl-sn-glycero-3-phosphocholine + H2O = a 1-acyl-sn-glycero-3-phosphocholine + a fatty acid + H(+). Functionally, snake venom phospholipase A2 (PLA2) that acts as a presynaptic neurotoxin, an inhibitor of blood coagulation, and has been found to bind with high affinity to intracellular proteins. The response of indirectly stimulated neuromuscular preparations to ammodytoxin (Atx) is triphasic. The first phase, the transient inhibition of the acetylcholine (ACh) release, starts soon after the addition of Atx and lasts for several minutes. This phase is probably independent of Atx enzymatic activity. The effect may be due to the specific binding of the toxin to presynaptic receptors. These receptors, called N-type receptors, are still unidentified. It is noteworthy that a neuronal isoform of the M-type PLA2 receptor (R180) has been identified as a high-affinity receptor for Atx in neuronal plasma membranes. It was demonstrated however that this receptor is not essential for expression of neurotoxicity by Atx. The second phase corresponds to an augmentation of neurotransmitter release. A peak is reached 10-20 minutes after exposure of the preparation to Atx and is followed by a gradual reduction. In this phase, the enzymatic activity of Atx of the mammalian is not significant. It is speculated that the increased release of neurotransmitter in this phase is induced by the interference of Atx with voltage-gated potassium channels. Measurements of ionic showed however that voltage-gated potassium channels are not affected by Atx. The third phase of the response of neuromuscular preparations to Atx, which corresponds to a complete and irreversible paralysis, is clearly dependent on the hydrolytic activity of the toxin. In addition to its presynaptic neurotoxicity, Atx shows an anticoagulant activity by binding with high affinity to activated coagulation factor X (F10) thus inhibiting the formation of the prothrombinase complex (FX/FV) and its activity (IC(50) is 240 nM). Surprisingly, Atx was discovered to bind intracellular proteins such as calmodulin (CaM), 14-3-3 proteins gamma (YWHAG) and epsilon (YWHAE), as well as R25, a mitochondrial integral membrane protein found in cerebral cortex. These findings raised a doubt about the dogma of the exclusively extracellular action of PLA2s, defended by the potential instability of these molecules in the reducing environment of the eukaryotic cytosol coupled with their possible inability to act as enzymes in this cellular compartment, due to too low concentration of calcium ions. This hypothesis was challenged efficiently by demonstrating the internalization of AtxA into a culture cells, but still remains to be directly demonstrated in vivo. PLA2 catalyzes the calcium-dependent hydrolysis of the 2-acyl groups in 3-sn-phosphoglycerides. The chain is Basic phospholipase A2 ammodytoxin C from Vipera ammodytes ammodytes (Western sand viper).